A 136-amino-acid polypeptide reads, in one-letter code: DNA-directed RNA polymerase subunit omega (136 aa).

The disordered stretch occupies residues 81 to 136; that stretch reads EAEAVPLLSSSPAAAAVAPQSSGDDGDIQFDRMSEEDLLRGLENLAPPTETEDEGD. Residues 83 to 99 are compositionally biased toward low complexity; it reads EAVPLLSSSPAAAAVAP. Over residues 109 to 120 the composition is skewed to basic and acidic residues; that stretch reads QFDRMSEEDLLR.

This sequence belongs to the RNA polymerase subunit omega family. In terms of assembly, the RNAP catalytic core consists of 2 alpha, 1 beta, 1 beta' and 1 omega subunit. When a sigma factor is associated with the core the holoenzyme is formed, which can initiate transcription.

The enzyme catalyses RNA(n) + a ribonucleoside 5'-triphosphate = RNA(n+1) + diphosphate. Its function is as follows. Promotes RNA polymerase assembly. Latches the N- and C-terminal regions of the beta' subunit thereby facilitating its interaction with the beta and alpha subunits. This Methylobacterium nodulans (strain LMG 21967 / CNCM I-2342 / ORS 2060) protein is DNA-directed RNA polymerase subunit omega.